The following is a 332-amino-acid chain: uncharacterized protein (332 aa).

A helical transmembrane segment spans residues 27–47 (CAIVFLCVLLILPFLSCCTSL).

The protein resides in the membrane. This is an uncharacterized protein from Treponema pallidum (strain Nichols).